The primary structure comprises 37 residues: Large ribosomal subunit protein bL36 (37 aa).

Belongs to the bacterial ribosomal protein bL36 family.

This Aliarcobacter butzleri (strain RM4018) (Arcobacter butzleri) protein is Large ribosomal subunit protein bL36.